A 521-amino-acid polypeptide reads, in one-letter code: Anaerobic nitric oxide reductase flavorubredoxin (521 aa).

Positions 30 to 210 (HKGTSYNSYL…PFSPLVTAKI (181 aa)) are zinc metallo-hydrolase. 6 residues coordinate Fe cation: H79, E81, D83, H147, D166, and H227. A Flavodoxin-like domain is found at 254–393 (ITLFYDSMSN…LCREHGRQLA (140 aa)). FMN is bound by residues 260 to 264 (SMSNN) and 342 to 369 (AFGS…DISI). In terms of domain architecture, Rubredoxin-like spans 464–515 (DQPMLCTVCQWIYDPALGEPDQLVAPGTPWARVPDSFLCPGCGIGKEVFEPC). Residues C469, C472, C502, and C505 each coordinate Fe cation.

The protein in the N-terminal section; belongs to the zinc metallo-hydrolase group 3 family. As to quaternary structure, homotetramer. Fe cation is required as a cofactor. FMN serves as cofactor.

The protein resides in the cytoplasm. Its pathway is nitrogen metabolism; nitric oxide reduction. Functionally, anaerobic nitric oxide reductase; uses NADH to detoxify nitric oxide (NO), protecting several 4Fe-4S NO-sensitive enzymes. Has at least 2 reductase partners, only one of which (NorW, flavorubredoxin reductase) has been identified. NO probably binds to the di-iron center; electrons enter from the NorW at rubredoxin and are transferred sequentially to the FMN center and the di-iron center. Also able to function as an aerobic oxygen reductase. This chain is Anaerobic nitric oxide reductase flavorubredoxin, found in Aeromonas salmonicida (strain A449).